A 189-amino-acid polypeptide reads, in one-letter code: Mediator of RNA polymerase II transcription subunit 21 (189 aa).

The segment at 50-102 (KIPKNSTAPPVPAGAPVPSQSSPPPPQTQRGASEAAADPNLPPAPDSPRTFAS) is disordered. Over residues 58–76 (PPVPAGAPVPSQSSPPPPQ) the composition is skewed to pro residues. Residues 127-170 (GIDSSEAEQEKRIRELEAELRGVEEEREAKIRELRTLGRTLERV) are a coiled coil.

It belongs to the Mediator complex subunit 21 family. Component of the Mediator complex.

It is found in the nucleus. Component of the Mediator complex, a coactivator involved in the regulated transcription of nearly all RNA polymerase II-dependent genes. Mediator functions as a bridge to convey information from gene-specific regulatory proteins to the basal RNA polymerase II transcription machinery. Mediator is recruited to promoters by direct interactions with regulatory proteins and serves as a scaffold for the assembly of a functional preinitiation complex with RNA polymerase II and the general transcription factors. The chain is Mediator of RNA polymerase II transcription subunit 21 (srb7) from Aspergillus clavatus (strain ATCC 1007 / CBS 513.65 / DSM 816 / NCTC 3887 / NRRL 1 / QM 1276 / 107).